A 319-amino-acid polypeptide reads, in one-letter code: Probable carboxylesterase 5 (319 aa).

N-acetylmethionine is present on methionine 1. An Involved in the stabilization of the negatively charged intermediate by the formation of the oxyanion hole motif is present at residues 79–81; the sequence is HGG. Active-site residues include serine 163, aspartate 262, and histidine 294.

It belongs to the 'GDXG' lipolytic enzyme family. As to expression, expressed in roots, leaves, stems, flowers and siliques.

It catalyses the reaction a carboxylic ester + H2O = an alcohol + a carboxylate + H(+). Functionally, carboxylesterase acting on esters with varying acyl chain length. The polypeptide is Probable carboxylesterase 5 (CXE5) (Arabidopsis thaliana (Mouse-ear cress)).